The following is a 388-amino-acid chain: Na(+)/H(+) antiporter NhaA (388 aa).

12 consecutive transmembrane segments (helical) span residues F8–I28, P33–L53, L59–V79, L95–F115, G125–S145, V154–F174, V179–W199, V217–I237, V259–V279, I287–F307, I328–L348, and L363–V383.

Belongs to the NhaA Na(+)/H(+) (TC 2.A.33) antiporter family.

It localises to the cell inner membrane. The enzyme catalyses Na(+)(in) + 2 H(+)(out) = Na(+)(out) + 2 H(+)(in). Na(+)/H(+) antiporter that extrudes sodium in exchange for external protons. The protein is Na(+)/H(+) antiporter NhaA of Photorhabdus laumondii subsp. laumondii (strain DSM 15139 / CIP 105565 / TT01) (Photorhabdus luminescens subsp. laumondii).